Here is a 286-residue protein sequence, read N- to C-terminus: MAPVGSIVLDGKATRDEIFVDLKQRVAKLTEAGRTPGLGTVLVGDDPGSQAYVRGKHADCAKVGINSIRRDLPADITQAQLDETIDELNANPDCTGYIVQLPLPKHLDENAALERIDPAKDADGLHPTNLGRLVLGKDAPLPCTPRGIVHLLRRFDVPIAGAHVVVIGRGVTVGRPMGLLLTRRSENATVTLCHTGTRDLPALTRQADIIIAAVGVPHMVTADMVKPGAAVVDVGVSRVDGKLTGDVAPDVWEVAGHVSPNPGGVGPLTRAFLLTNVVELEESKLA.

Residues Gly168–Gly170, Thr195, and Val236 contribute to the NADP(+) site.

This sequence belongs to the tetrahydrofolate dehydrogenase/cyclohydrolase family. In terms of assembly, homodimer.

The catalysed reaction is (6R)-5,10-methylene-5,6,7,8-tetrahydrofolate + NADP(+) = (6R)-5,10-methenyltetrahydrofolate + NADPH. The enzyme catalyses (6R)-5,10-methenyltetrahydrofolate + H2O = (6R)-10-formyltetrahydrofolate + H(+). Its pathway is one-carbon metabolism; tetrahydrofolate interconversion. Catalyzes the oxidation of 5,10-methylenetetrahydrofolate to 5,10-methenyltetrahydrofolate and then the hydrolysis of 5,10-methenyltetrahydrofolate to 10-formyltetrahydrofolate. In Mycolicibacterium fortuitum (Mycobacterium fortuitum), this protein is Bifunctional protein FolD.